The following is a 412-amino-acid chain: 43 kDa receptor-associated protein of the synapse (412 aa).

The N-myristoyl glycine moiety is linked to residue glycine 2. 7 TPR repeats span residues threonine 6–proline 39, threonine 83–threonine 116, glycine 123–asparagine 156, cysteine 163–tyrosine 196, alanine 206–histidine 239, alanine 246–isoleucine 279, and isoleucine 286–leucine 319. Tyrosine 196 carries the post-translational modification Phosphotyrosine. The RING-type zinc-finger motif lies at cysteine 363–arginine 403.

The protein belongs to the RAPsyn family. Expressed in muscle fibers and in neurons.

It is found in the cell membrane. The protein resides in the postsynaptic cell membrane. The protein localises to the cytoplasm. Its subcellular location is the cytoskeleton. Functionally, postsynaptic protein required for clustering of nicotinic acetylcholine receptors (nAChRs) at the neuromuscular junction. It may link the receptor to the underlying postsynaptic cytoskeleton, possibly by direct association with actin or spectrin. This is 43 kDa receptor-associated protein of the synapse (RAPSN) from Gallus gallus (Chicken).